The following is a 292-amino-acid chain: 33 kDa chaperonin (292 aa).

Disulfide bonds link Cys230-Cys232 and Cys263-Cys266.

This sequence belongs to the HSP33 family. Post-translationally, under oxidizing conditions two disulfide bonds are formed involving the reactive cysteines. Under reducing conditions zinc is bound to the reactive cysteines and the protein is inactive.

The protein localises to the cytoplasm. Redox regulated molecular chaperone. Protects both thermally unfolding and oxidatively damaged proteins from irreversible aggregation. Plays an important role in the bacterial defense system toward oxidative stress. This Escherichia coli O17:K52:H18 (strain UMN026 / ExPEC) protein is 33 kDa chaperonin.